We begin with the raw amino-acid sequence, 90 residues long: MSHDKKQNLQDVFLNSVRKTKTPLTIFLVNGVKLQGVVTWFDNFCVLLRRDGLSQLVYKHAISTIMPAAPVSLFEDDKADDDAAEESATD.

Residues 11–71 (DVFLNSVRKT…ISTIMPAAPV (61 aa)) form the Sm domain.

The protein belongs to the Hfq family. In terms of assembly, homohexamer.

RNA chaperone that binds small regulatory RNA (sRNAs) and mRNAs to facilitate mRNA translational regulation in response to envelope stress, environmental stress and changes in metabolite concentrations. Also binds with high specificity to tRNAs. The protein is RNA-binding protein Hfq of Maricaulis maris (strain MCS10) (Caulobacter maris).